We begin with the raw amino-acid sequence, 688 residues long: Polyribonucleotide nucleotidyltransferase (688 aa).

Mg(2+)-binding residues include Asp484 and Asp490. A KH domain is found at Pro550–Ile609. Residues Asp626–Ala688 enclose the S1 motif domain.

Belongs to the polyribonucleotide nucleotidyltransferase family. It depends on Mg(2+) as a cofactor.

The protein resides in the cytoplasm. The catalysed reaction is RNA(n+1) + phosphate = RNA(n) + a ribonucleoside 5'-diphosphate. Functionally, involved in mRNA degradation. Catalyzes the phosphorolysis of single-stranded polyribonucleotides processively in the 3'- to 5'-direction. The sequence is that of Polyribonucleotide nucleotidyltransferase from Helicobacter acinonychis (strain Sheeba).